The following is a 268-amino-acid chain: Phosphoethanolamine/phosphocholine phosphatase (268 aa).

The active-site Nucleophile is aspartate 32. Mg(2+)-binding residues include aspartate 32 and aspartate 34. Catalysis depends on aspartate 34, which acts as the Proton donor. Substrate contacts are provided by aspartate 43 and aspartate 123. Mg(2+) is bound at residue aspartate 203.

The protein belongs to the HAD-like hydrolase superfamily. PHOSPHO family. Mg(2+) serves as cofactor. As to expression, expressed at sites of mineralization in bone and cartilage. Highly expressed in hypertrophic chondrocytes compared to non-chondrogenic tissues. Expressed in chondrocytes but not in heart, liver, lung, kidney, spleen, muscle, adipose tissues not duodenum. In diaphyseal cortical bone, it is expressed in the osteoid layer of the periosteum, forming surfaces of growing osteons, and newly formed osteocytes, whereas it is not expressed in the endosteum and closed osteons. In growth plate cartilage, it is limited to the early hypertrophic chondrocytes and the ossification groove of Ranvier. Highly expressed on the mineralization surfaces of the cartilage remnants and trabecular bone within the primary spongiosa. Expressed in 17-day-old embryonic calvaria, the osteoid present on the intramembranous and periosteal bone surfaces but not in soft tissues examined.

Its subcellular location is the extracellular vesicle. The enzyme catalyses phosphoethanolamine + H2O = ethanolamine + phosphate. It carries out the reaction phosphocholine + H2O = choline + phosphate. Functionally, phosphatase that has a high activity toward phosphoethanolamine (PEA) and phosphocholine (PCho). Involved in the generation of inorganic phosphate for bone mineralization. In Gallus gallus (Chicken), this protein is Phosphoethanolamine/phosphocholine phosphatase (PHOSPHO1).